Consider the following 262-residue polypeptide: Nodulation protein J (262 aa).

Positions alanine 33–arginine 259 constitute an ABC transmembrane type-2 domain. 7 consecutive transmembrane segments (helical) span residues isoleucine 35–methionine 55, glycine 62–serine 82, alanine 102–alanine 122, leucine 127–leucine 147, leucine 148–valine 168, tyrosine 177–phenylalanine 197, and leucine 231–leucine 251.

Belongs to the ABC-2 integral membrane protein family. Lipooligosaccharide exporter (TC 3.A.1.102) subfamily. As to quaternary structure, the complex is composed of two ATP-binding proteins (NodI) and two transmembrane proteins (NodJ).

Its subcellular location is the cell inner membrane. Its function is as follows. Part of the ABC transporter complex NodIJ involved in the export of the nodulation factors (Nod factors), the bacterial signal molecules that induce symbiosis and subsequent nodulation induction. Nod factors are LCO (lipo-chitin oligosaccharide), a modified beta-1,4-linked N-acetylglucosamine oligosaccharide. This subunit encodes the transporter. The sequence is that of Nodulation protein J (nodJ) from Rhizobium meliloti (strain 1021) (Ensifer meliloti).